The primary structure comprises 395 residues: L-methionine gamma-lyase (395 aa).

Pyridoxal 5'-phosphate-binding positions include Tyr56–Arg58 and Gly86–Met87. Position 111 (Tyr111) interacts with substrate. Ser206 to Thr208 serves as a coordination point for pyridoxal 5'-phosphate. N6-(pyridoxal phosphate)lysine is present on Lys209. Arg373 serves as a coordination point for substrate.

This sequence belongs to the trans-sulfuration enzymes family. L-methionine gamma-lyase subfamily. Homotetramer. It depends on pyridoxal 5'-phosphate as a cofactor.

The enzyme catalyses L-methionine + H2O = methanethiol + 2-oxobutanoate + NH4(+). The catalysed reaction is L-homocysteine + H2O = 2-oxobutanoate + hydrogen sulfide + NH4(+) + H(+). Catalyzes the alpha,gamma-elimination of L-methionine to produce methanethiol, 2-oxobutanoate and ammonia; methanethiol (methyl mercaptan) is considered to be one of the main causes of the oral malodor associated with periodontitis. Also displays homocysteine desulfhydrase activity, degrading homocysteine to produce hydrogen sulfide, 2-oxobutanoate and ammonia. L-cysteine and S-methyl-L-cysteine are poor substrates for the enzyme. In terms of biological role, plays an important role in the resistance of F.nucleatum to the antibacterial agent 3-chloro-DL-alanine (3CA), thanks to its 3CA chloride-lyase (deaminating) activity. The protein is L-methionine gamma-lyase of Fusobacterium nucleatum subsp. polymorphum (Fusobacterium polymorphum).